The following is a 381-amino-acid chain: Alcohol dehydrogenase-like 6 (381 aa).

8 residues coordinate Zn(2+): Cys-53, Ser-55, His-72, Cys-102, Cys-105, Cys-108, Cys-116, and Cys-179. The an alcohol site is built by Ser-55 and His-72. Position 55 (Ser-55) interacts with NAD(+). NAD(+) contacts are provided by residues 204-209, Asp-228, Lys-233, 297-299, Phe-324, and Arg-374; these read GLGTVG and LGV.

It belongs to the zinc-containing alcohol dehydrogenase family. Class-III subfamily. As to quaternary structure, homodimer. Zn(2+) is required as a cofactor.

The protein localises to the cytoplasm. It carries out the reaction a primary alcohol + NAD(+) = an aldehyde + NADH + H(+). The enzyme catalyses a secondary alcohol + NAD(+) = a ketone + NADH + H(+). The protein is Alcohol dehydrogenase-like 6 of Arabidopsis thaliana (Mouse-ear cress).